The following is a 477-amino-acid chain: Exodeoxyribonuclease 7 large subunit (477 aa).

The disordered stretch occupies residues Lys-452–Gly-477.

Belongs to the XseA family. In terms of assembly, heterooligomer composed of large and small subunits.

It localises to the cytoplasm. The catalysed reaction is Exonucleolytic cleavage in either 5'- to 3'- or 3'- to 5'-direction to yield nucleoside 5'-phosphates.. In terms of biological role, bidirectionally degrades single-stranded DNA into large acid-insoluble oligonucleotides, which are then degraded further into small acid-soluble oligonucleotides. This Erythrobacter litoralis (strain HTCC2594) protein is Exodeoxyribonuclease 7 large subunit.